The following is a 122-amino-acid chain: Fluoride-specific ion channel FluC (122 aa).

4 helical membrane-spanning segments follow: residues 1-21 (MIGTILAVGFGGFLGAISRML), 34-54 (FPYGTLLVNIIGSFLMGLFFS), 60-80 (GVHIFTKSLISTGFLSAFTTF), and 100-120 (FLNIILNVILCLLAVWIGFLI).

The protein belongs to the fluoride channel Fluc/FEX (TC 1.A.43) family.

The protein resides in the cell inner membrane. The catalysed reaction is fluoride(in) = fluoride(out). Functionally, fluoride-specific ion channel. Important for reducing fluoride concentration in the cell, thus reducing its toxicity. The protein is Fluoride-specific ion channel FluC of Campylobacter lari (strain RM2100 / D67 / ATCC BAA-1060).